The following is a 498-amino-acid chain: Angiopoietin-1 (498 aa).

A signal peptide spans 1-19; it reads MTVFLSFAFFAAILTHIGC. Positions 81-119 form a coiled coil; that stretch reads QKLQHLEHVMENYTQWLQKLENYIVENMKSEMAQIQQNA. N-linked (GlcNAc...) asparagine glycans are attached at residues Asn-92, Asn-122, Asn-154, Asn-243, and Asn-295. Positions 153 to 261 form a coiled coil; that stretch reads LNQTSRLEIQ…LELMDTVHNL (109 aa). Residues 277 to 497 form the Fibrinogen C-terminal domain; that stretch reads REEEKPFRDC…STTMMIRPLD (221 aa). Disulfide bonds link Cys-286–Cys-315 and Cys-439–Cys-452.

As to quaternary structure, homooligomer. Interacts with TEK/TIE2. Interacts with SVEP1/polydom. Interacts with THBD; this interaction significantly inhibits the generation of activated PC and TAFIa/CPB2 by the thrombin/thrombomodulin complex.

The protein localises to the secreted. Its function is as follows. Binds and activates TEK/TIE2 receptor by inducing its dimerization and tyrosine phosphorylation. Plays an important role in the regulation of angiogenesis, endothelial cell survival, proliferation, migration, adhesion and cell spreading, reorganization of the actin cytoskeleton, but also maintenance of vascular quiescence. Required for normal angiogenesis and heart development during embryogenesis. After birth, activates or inhibits angiogenesis, depending on the context. Inhibits angiogenesis and promotes vascular stability in quiescent vessels, where endothelial cells have tight contacts. In quiescent vessels, ANGPT1 oligomers recruit TEK to cell-cell contacts, forming complexes with TEK molecules from adjoining cells, and this leads to preferential activation of phosphatidylinositol 3-kinase and the AKT1 signaling cascades. In migrating endothelial cells that lack cell-cell adhesions, ANGT1 recruits TEK to contacts with the extracellular matrix, leading to the formation of focal adhesion complexes, activation of PTK2/FAK and of the downstream kinases MAPK1/ERK2 and MAPK3/ERK1, and ultimately to the stimulation of sprouting angiogenesis. Mediates blood vessel maturation/stability. Implicated in endothelial developmental processes later and distinct from that of VEGF. Appears to play a crucial role in mediating reciprocal interactions between the endothelium and surrounding matrix and mesenchyme. The polypeptide is Angiopoietin-1 (Angpt1) (Mus musculus (Mouse)).